The sequence spans 286 residues: Protein HEXIM2 (286 aa).

The segment covering Met-1–Asn-11 has biased composition (polar residues). Residues Met-1 to Glu-195 are disordered. Ser-29 carries the phosphoserine modification. Phosphothreonine is present on Thr-32. A Phosphoserine modification is found at Ser-39. Thr-46 is modified (phosphothreonine). Ser-51, Ser-53, Ser-71, Ser-76, and Ser-81 each carry phosphoserine. Residues Asn-68–Gly-78 show a composition bias toward polar residues. Residues Ala-87–Arg-103 are compositionally biased toward basic residues. Basic and acidic residues predominate over residues Lys-113–Phe-132. The interval Pro-140–Thr-143 is interaction with P-TEFb. A compositionally biased stretch (basic and acidic residues) spans Ser-178–Glu-195. Positions Gly-207 to Gly-277 form a coiled coil. The interaction with CCNT1, HEXIM1 and HEXIM2 stretch occupies residues Gln-226–Thr-286.

Belongs to the HEXIM family. As to quaternary structure, homooligomer and heterooligomer with HEXIM1; probably dimeric. Core component of the 7SK RNP complex, at least composed of 7SK RNA, LARP7, MEPCE, HEXIM1 (or HEXIM2) and P-TEFb (composed of CDK9 and CCNT1/cyclin-T1). Interacts with CCNT2. Ubiquitously expressed with higher expression in testis. HEXIM1 and HEXIM2 are differentially expressed.

Its subcellular location is the nucleus. Transcriptional regulator which functions as a general RNA polymerase II transcription inhibitor. Core component of the 7SK RNP complex: in cooperation with 7SK snRNA sequesters P-TEFb in a large inactive 7SK snRNP complex preventing RNA polymerase II phosphorylation and subsequent transcriptional elongation. The polypeptide is Protein HEXIM2 (HEXIM2) (Homo sapiens (Human)).